We begin with the raw amino-acid sequence, 358 residues long: tRNA (guanine-N(7)-)-methyltransferase (358 aa).

Positions 1–29 (MTPPPPKRQKRDEYRKATAEATSQSGASD) are disordered. Residues Gly-99 and 122 to 123 (EI) contribute to the S-adenosyl-L-methionine site. Positions 151-186 (TATAASETPSQQQAQIDGKQANANAAADAASPAPST) are enriched in low complexity. Residues 151-194 (TATAASETPSQQQAQIDGKQANANAAADAASPAPSTDTEHMPTT) form a disordered region. Residues 209-210 (NT) and Cys-229 contribute to the S-adenosyl-L-methionine site. Residue Asp-232 is part of the active site. Residue 330–332 (TEE) participates in S-adenosyl-L-methionine binding.

Belongs to the class I-like SAM-binding methyltransferase superfamily. TrmB family. As to quaternary structure, forms a complex with trm82.

The protein localises to the nucleus. It catalyses the reaction guanosine(46) in tRNA + S-adenosyl-L-methionine = N(7)-methylguanosine(46) in tRNA + S-adenosyl-L-homocysteine. It functions in the pathway tRNA modification; N(7)-methylguanine-tRNA biosynthesis. Its function is as follows. Catalyzes the formation of N(7)-methylguanine at position 46 (m7G46) in tRNA. This Aspergillus fumigatus (strain CBS 144.89 / FGSC A1163 / CEA10) (Neosartorya fumigata) protein is tRNA (guanine-N(7)-)-methyltransferase (trm8).